A 325-amino-acid polypeptide reads, in one-letter code: MTYSKNVFVPVTNICRNRCGYCGFRREPGQPGARLMKPEEILPVLENGAKAGCTEALFTFGEYAEEVSEYRKWLKKLGYSSTLEYLLFLCEASIDIGILPHTNAGIMTRTELKALKPLNASMGLMLESTATLDAHKDCPGKLPELRLNTIREAGKLQIPYTTGLLIGIGEIREDRIESLEAIAGLHREYGHIQEVIIQNFAPKPGTPMENFPAPSIEEIIDTICLARQILPSDIAVQVAPNLIDPKALIAKGVTDLGGISPLTIDWINPEAEWPDIKELQRKLSPILLKERLPIYPQYVRKKWYSDRIGGLIEQLSDTDGYRKKP.

The Radical SAM core domain occupies 1–241 (MTYSKNVFVP…SDIAVQVAPN (241 aa)). Positions 15, 19, and 22 each coordinate [4Fe-4S] cluster.

Belongs to the radical SAM superfamily. CofG family. Consists of two subunits, CofG and CofH. The cofactor is [4Fe-4S] cluster.

The enzyme catalyses 5-amino-5-(4-hydroxybenzyl)-6-(D-ribitylimino)-5,6-dihydrouracil + S-adenosyl-L-methionine = 7,8-didemethyl-8-hydroxy-5-deazariboflavin + 5'-deoxyadenosine + L-methionine + NH4(+) + H(+). The protein operates within cofactor biosynthesis; coenzyme F0 biosynthesis. Its function is as follows. Catalyzes the radical-mediated synthesis of 7,8-didemethyl-8-hydroxy-5-deazariboflavin from 5-amino-5-(4-hydroxybenzyl)-6-(D-ribitylimino)-5,6-dihydrouracil. The polypeptide is 7,8-didemethyl-8-hydroxy-5-deazariboflavin synthase (Methanosarcina barkeri (strain Fusaro / DSM 804)).